The primary structure comprises 112 residues: Transmembrane protein 14C (112 aa).

4 helical membrane passes run Val7–Ile27, Ala32–Ala52, Val62–His82, and Pro88–Phe108.

This sequence belongs to the TMEM14 family.

It is found in the mitochondrion membrane. In terms of biological role, required for normal heme biosynthesis. The chain is Transmembrane protein 14C (TMEM14C) from Homo sapiens (Human).